A 645-amino-acid polypeptide reads, in one-letter code: Protein LHY (645 aa).

Phosphoserine is present on Ser6. The HTH myb-type domain maps to 19–73; that stretch reads TITKQRERWTEDEHERFLEALRLYGRAWQRIEEHIGTKTAVQIRSHAQKFFTKLE. The segment at residues 46 to 69 is a DNA-binding region (H-T-H motif); the sequence is WQRIEEHIGTKTAVQIRSHAQKFF. Disordered regions lie at residues 89–127, 149–212, 410–437, and 458–500; these read IEIPPPRPKRKPNTPYPRKPGNNGTSSSQVSSAKDAKLV, EKTS…GTTV, QNLASKSPASSSDDSDETGVTKLNADSK, and AQKK…TDEN. Over residues 110 to 120 the composition is skewed to polar residues; the sequence is NNGTSSSQVSS. A compositionally biased stretch (basic and acidic residues) spans 149-158; sequence EKTSTGKENQ. The segment covering 159–169 has biased composition (polar residues); sequence DENCSGVSTVN. Basic and acidic residues predominate over residues 197–207; sequence VPKKNKDKDGN. Residues 468–478 show a composition bias toward polar residues; it reads SCGSNTPSGSD. The span at 483 to 498 shows a compositional bias: basic and acidic residues; the sequence is ALDKMEKDKEDVKETD.

In terms of assembly, homodimer or heterodimer with CCA1. Interacts with CCA1 (via internal domain); independently of photoperiod. Functions probably as part of a large complex. Interacts with CKB1 and CKB3. Interacts with LNK1 and LNK2. Phosphorylated by CK2. In terms of tissue distribution, expressed in leaves, roots, stems, flowers and siliques.

Its subcellular location is the nucleus. Functionally, transcription factor involved in the circadian clock. Binds to the promoter region of APRR1/TOC1 and TCP21/CHE to repress their transcription. Represses both CCA1 and itself. May recognize the promoter of JMJ14 to regulates its expression during the night in a circadian manner. This chain is Protein LHY, found in Arabidopsis thaliana (Mouse-ear cress).